The sequence spans 66 residues: Large ribosomal subunit protein bL33c (66 aa).

It belongs to the bacterial ribosomal protein bL33 family.

It is found in the plastid. The protein localises to the chloroplast. This chain is Large ribosomal subunit protein bL33c, found in Coffea arabica (Arabian coffee).